Reading from the N-terminus, the 119-residue chain is C-X-C motif chemokine 17 (119 aa).

Residues 1 to 21 (MKVLISSLLLLLPLMLMSMVS) form the signal peptide. Intrachain disulfides connect cysteine 75–cysteine 103 and cysteine 77–cysteine 110. The tract at residues 81–100 (KGNVKKTRHQRHHRKPNKHS) is disordered. The span at 82 to 100 (GNVKKTRHQRHHRKPNKHS) shows a compositional bias: basic residues.

This sequence belongs to the intercrine alpha (chemokine CxC) family. In terms of processing, likely to undergo an endoproteolytic process to form a four-cysteine-containing mature peptide with a canonical CXC chemokine scaffold after secretion. In terms of tissue distribution, detected in trachea, stomach, lung and skeletal muscle. Detected in intestine and in normal and asthmatic lung (at protein level). Breast tumors showed 3- to 24-fold up-regulation.

It is found in the secreted. Its function is as follows. Chemokine that acts as a chemoattractant for monocytes, macrophages and dendritic cells. Plays a role in angiogenesis and possibly in the development of tumors. Acts as an anti-inflammatory in the stomach. May play a role in the innate defense against infections. Activates the C-X-C chemokine receptor GPR35 to induce a rapid and transient rise in the level of intracellular calcium ions. Seems to exhibit much higher chemoattractant potency on monocytes and macrophages than 6-Cys CXCL17. This is C-X-C motif chemokine 17 (CXCL17) from Homo sapiens (Human).